The sequence spans 188 residues: Thymidine kinase (188 aa).

17 to 24 (GPMFAGKT) is a binding site for ATP. E92 functions as the Proton acceptor in the catalytic mechanism. F121 contacts substrate. Zn(2+)-binding residues include C146 and C149. 166 to 170 (LILAG) is a substrate binding site. The Zn(2+) site is built by C179 and C182.

Belongs to the thymidine kinase family.

It catalyses the reaction thymidine + ATP = dTMP + ADP + H(+). Phosphorylates thymidine. ASFV replicates in the cytoplasm of infected cells and contains genes encoding a number of enzymes needed for DNA synthesis, including thymidine kinase. Important for growth in swine macrophages in vitro and is a virus virulence factor in swine. The polypeptide is Thymidine kinase (African swine fever virus (isolate Tick/South Africa/Pretoriuskop Pr4/1996) (ASFV)).